A 95-amino-acid chain; its full sequence is Cell division topological specificity factor (95 aa).

This sequence belongs to the MinE family.

Prevents the cell division inhibition by proteins MinC and MinD at internal division sites while permitting inhibition at polar sites. This ensures cell division at the proper site by restricting the formation of a division septum at the midpoint of the long axis of the cell. The chain is Cell division topological specificity factor from Psychrobacter cryohalolentis (strain ATCC BAA-1226 / DSM 17306 / VKM B-2378 / K5).